We begin with the raw amino-acid sequence, 434 residues long: MAVTVETLEKLERRITLILSADTIKNEVEMRLKRLAKTVKADGFRPGKVPMSVVAQRYGYSVQYEVMNDKVGEAFSKAANEAQLRVAGAPRISEKEGAPEGELAFDATFEVYPDVKIGDLSATEIDRVSTEVTDAAIDKTLDILRKQRRTFAQRAASEGAVDGDRVTIDFEGKIDGVPFDGGKAEGFQFILGEGRMLEAFEKAVRGMKTGESKTFPLQFPDDYQGKEVAGKEADFLVTLTKIEAQHLPEVDEAFAQSLGIQDPTLEGLRADIRKNLEREVKNRLIARNKSAVMEALIKVADLDLPKALVQNETDRMIEGARADLKQRGIKDADKAPIPAEIFHEQAERRVRLGLVVAELVRTNQLQAKGEQIGAHIEEMALSYEKPEEVRRWYFGDRQRLAEVEALVVENNVTEFVLSKAKVSDKQLPFDELMV.

The 86-residue stretch at 163–248 folds into the PPIase FKBP-type domain; it reads GDRVTIDFEG…LTKIEAQHLP (86 aa).

The protein belongs to the FKBP-type PPIase family. Tig subfamily.

It localises to the cytoplasm. The catalysed reaction is [protein]-peptidylproline (omega=180) = [protein]-peptidylproline (omega=0). Functionally, involved in protein export. Acts as a chaperone by maintaining the newly synthesized protein in an open conformation. Functions as a peptidyl-prolyl cis-trans isomerase. The protein is Trigger factor of Methylibium petroleiphilum (strain ATCC BAA-1232 / LMG 22953 / PM1).